We begin with the raw amino-acid sequence, 280 residues long: Transcription factor MYB46 (280 aa).

2 HTH myb-type domains span residues 15–67 and 68–122; these read VKKM…INYL and RPDL…KKRL. 2 DNA-binding regions (H-T-H motif) span residues 43–67 and 95–118; these read WSDV…INYL and WSQI…NSTI. Residues 129 to 150 form a disordered region; it reads SNLINNSSSSPNTASDSSSNSA.

In terms of tissue distribution, expressed at low levels in stems and siliques, specifically in xylem.

The protein localises to the nucleus. Transcription activator. Involved in the regulation of secondary wall biosynthesis in fibers and vessels. Transcription activator of the mannan synthase CSLA9 that recognizes and binds to the DNA consensus sequence 5'-[AG][GT]T[AT]GGT[GA]-3' cis-regulatory element of CSLA9 promoter. Transcription factor that acts as a molecular switch in the NAC012/SND1-mediated transcriptional network regulating secondary wall biosynthesis. Is directly activated by NAC012/SND1. Functions redundantly with MYB83 in the transcriptional regulatory cascade leading to secondary wall formation in fibers and vessels. Transcription activator that binds to the DNA consensus sequence 5'-ACC[AT]A[AC][TC]-3', designated as the secondary wall MYB-responsive element (SMRE). Regulates directly numerous transcription factors and a number of genes involved in secondary wall biosynthesis that contain SMRE elements in their promoters. Is an obligate component of the transcriptional regulatory complex toward the commitment of secondary wall cellulose synthesis. Is required for functional expression of the three secondary wall CESA genes, CESA4, CESA7 and CESA8. The protein is Transcription factor MYB46 of Arabidopsis thaliana (Mouse-ear cress).